The sequence spans 295 residues: Pyridoxal 5'-phosphate synthase subunit PdxS (295 aa).

Asp-25 provides a ligand contact to D-ribose 5-phosphate. Catalysis depends on Lys-82, which acts as the Schiff-base intermediate with D-ribose 5-phosphate. D-ribose 5-phosphate is bound at residue Gly-154. Arg-166 contacts D-glyceraldehyde 3-phosphate. Residues Gly-215 and 236–237 (GS) contribute to the D-ribose 5-phosphate site.

Belongs to the PdxS/SNZ family. In the presence of PdxT, forms a dodecamer of heterodimers.

The enzyme catalyses aldehydo-D-ribose 5-phosphate + D-glyceraldehyde 3-phosphate + L-glutamine = pyridoxal 5'-phosphate + L-glutamate + phosphate + 3 H2O + H(+). It participates in cofactor biosynthesis; pyridoxal 5'-phosphate biosynthesis. Functionally, catalyzes the formation of pyridoxal 5'-phosphate from ribose 5-phosphate (RBP), glyceraldehyde 3-phosphate (G3P) and ammonia. The ammonia is provided by the PdxT subunit. Can also use ribulose 5-phosphate and dihydroxyacetone phosphate as substrates, resulting from enzyme-catalyzed isomerization of RBP and G3P, respectively. The chain is Pyridoxal 5'-phosphate synthase subunit PdxS from Heliobacterium modesticaldum (strain ATCC 51547 / Ice1).